A 609-amino-acid chain; its full sequence is Threonine--tRNA ligase (609 aa).

Residues 215–506 (DHRIIGNEMK…LIEHTAGELP (292 aa)) are catalytic. Positions 307, 358, and 483 each coordinate Zn(2+).

It belongs to the class-II aminoacyl-tRNA synthetase family. In terms of assembly, homodimer. Zn(2+) serves as cofactor.

The protein localises to the cytoplasm. The enzyme catalyses tRNA(Thr) + L-threonine + ATP = L-threonyl-tRNA(Thr) + AMP + diphosphate + H(+). Functionally, catalyzes the attachment of threonine to tRNA(Thr) in a two-step reaction: L-threonine is first activated by ATP to form Thr-AMP and then transferred to the acceptor end of tRNA(Thr). Also edits incorrectly charged L-seryl-tRNA(Thr). The sequence is that of Threonine--tRNA ligase from Campylobacter hominis (strain ATCC BAA-381 / DSM 21671 / CCUG 45161 / LMG 19568 / NCTC 13146 / CH001A).